The following is a 156-amino-acid chain: Deoxyuridine 5'-triphosphate nucleotidohydrolase (156 aa).

Residues 76-78 (RSG), N89, 93-95 (TVD), and K103 each bind substrate.

Belongs to the dUTPase family. Requires Mg(2+) as cofactor.

It carries out the reaction dUTP + H2O = dUMP + diphosphate + H(+). Its pathway is pyrimidine metabolism; dUMP biosynthesis; dUMP from dCTP (dUTP route): step 2/2. In terms of biological role, this enzyme is involved in nucleotide metabolism: it produces dUMP, the immediate precursor of thymidine nucleotides and it decreases the intracellular concentration of dUTP so that uracil cannot be incorporated into DNA. The polypeptide is Deoxyuridine 5'-triphosphate nucleotidohydrolase (Rhizobium etli (strain ATCC 51251 / DSM 11541 / JCM 21823 / NBRC 15573 / CFN 42)).